A 303-amino-acid polypeptide reads, in one-letter code: tRNA pseudouridine synthase A (303 aa).

D59 acts as the Nucleophile in catalysis. Residue Y128 participates in substrate binding.

Belongs to the tRNA pseudouridine synthase TruA family. In terms of assembly, homodimer.

The catalysed reaction is uridine(38/39/40) in tRNA = pseudouridine(38/39/40) in tRNA. In terms of biological role, formation of pseudouridine at positions 38, 39 and 40 in the anticodon stem and loop of transfer RNAs. The protein is tRNA pseudouridine synthase A of Bifidobacterium longum (strain DJO10A).